Consider the following 1207-residue polypeptide: MIDVNNFHYMKIGLASPEKIRSWSFGEVKKPETINYRTLKPEKDGLFCERIFGPTKDWECSCGKYKRVRYKGMVCDRCGVEVTKSKVRRERMGHIELAAPVSHIWYFKGIPSRMGLLLDMSPRALEEVIYFASYVVVNPGPTGLEKKTLLSEAEFREYYDKFPGKFTAKMGAEGIKELLEEIDLDAELKHLRDELESATGQRLTRAIKRLEVVESFRHSGNNPAWMILDVLPIIPPEIRPMVQLDGGRFATSDLNDLYRRVINRNNRLKRLLDLGAPGIIVQNEKRMLQEAVDALIDNGRRGRPVTGPGNRPLKSLSHMLKGKQGRFRQNLLGKRVDYSGRSVIAVGPSLKMYQCGLPKEMALELFKPFIMKELVQREIATNIKNAKSKIERMDDEVWDVLEDVIKEHPVLLNRAPTLHRLGIQAFEPTLVEGRAIRLHPLATTAYNADFDGDQMAVHVPLSKEAQAEARMLMLAAQNILNPKDGKPVVTPSQDMVLGNYYLTLERKEAVNTGTIYNDTNEVLKAYANGYVHLHTRIGVHAASFNNPTFTEEQNKKILLTSVGKVIFNEIIPDSFAYINEPTQTNLENKTPEKYFIAPTEIGEEGLKAYFDEQPLIKPFNKNFLGNVIAEVFNRFSITDTSMMLDRMKDLGFKFSSKAGITVGVSDIVVLPDKQDILDEHEKLVEKVTKQFNRGLITDFERYNAVIEIWTDAKDQIQNELMGSLEKTNPIFMMSDSGARGNASNFTQLAGMRGLMAAPSGEIIELPITSSFREGLTVLEYFISTHGARKGLADTALKTADSGYLTRRLVDVAQDVIVREEDCGTDRGLLVSDIKEGTEMIEPFIERIEGRYSKETIRHPETNEVIVNPDELVTAEIAKKITDAGIEEMYIRSAFTCNTRHGVCEKCYGKNLATGEKVEVGEAVGTIAAQSIGEPGTQLTMRTFHTGGVAGSDITQGLPRIQEIFEARNPKGQAVITEIEGVVDDIKLAKDRQQEIVIKGANETKSYLASGTSRLKVEVGQSVERGEVLTEGSIEPKNYLSVSGLNATESYLLKEVQKVYRMQGVEIDDKHVEVMVRQMLRKVRIIEAGDTKLLPGSLVDIHNFTDANREAFKERKRPATAKPVLLGITKASLETESFLSAASFQETTRVLTDAAIKGKRDNLLGLKENVIIGKLIPAGTGMRRYRDVEYDKAAPETEIVEEVQTTEI.

Cys-60, Cys-62, Cys-75, and Cys-78 together coordinate Zn(2+). Positions 449, 451, and 453 each coordinate Mg(2+). Positions 822, 896, 903, and 906 each coordinate Zn(2+).

Belongs to the RNA polymerase beta' chain family. The RNAP catalytic core consists of 2 alpha, 1 beta, 1 beta' and 1 omega subunit. When a sigma factor is associated with the core the holoenzyme is formed, which can initiate transcription. It depends on Mg(2+) as a cofactor. Requires Zn(2+) as cofactor.

The catalysed reaction is RNA(n) + a ribonucleoside 5'-triphosphate = RNA(n+1) + diphosphate. DNA-dependent RNA polymerase catalyzes the transcription of DNA into RNA using the four ribonucleoside triphosphates as substrates. In Staphylococcus saprophyticus subsp. saprophyticus (strain ATCC 15305 / DSM 20229 / NCIMB 8711 / NCTC 7292 / S-41), this protein is DNA-directed RNA polymerase subunit beta'.